Here is a 103-residue protein sequence, read N- to C-terminus: Cystatin-A8 (103 aa).

Residues 1–20 are disordered; it reads MESEEMLAGGLTEPRPATPE. Residues 51–55 carry the Secondary area of contact motif; that stretch reads QVVAG.

This sequence belongs to the cystatin family.

It localises to the cytoplasm. Its function is as follows. This is an intracellular thiol proteinase inhibitor. The protein is Cystatin-A8 of Sus scrofa (Pig).